The following is a 182-amino-acid chain: UPF0316 protein BCAH820_3389 (182 aa).

3 consecutive transmembrane segments (helical) span residues 6–26 (LIFV…ILLV), 32–52 (SAAA…GIVF), and 58–78 (WMNI…GGYI).

It belongs to the UPF0316 family.

It localises to the cell membrane. The chain is UPF0316 protein BCAH820_3389 from Bacillus cereus (strain AH820).